The following is a 309-amino-acid chain: Probable lipid kinase YegS-like (309 aa).

In terms of domain architecture, DAGKc spans 1–134; the sequence is MAPSHWRVIL…VDLLRIDADH (134 aa). Residues Thr-39, 65-71, and Thr-96 contribute to the ATP site; that span reads GDGTLSE. Residues Leu-219, Asp-222, and Leu-224 each contribute to the Mg(2+) site. Glu-280 serves as the catalytic Proton acceptor.

The protein belongs to the diacylglycerol/lipid kinase family. YegS lipid kinase subfamily. The cofactor is Mg(2+). It depends on Ca(2+) as a cofactor.

The protein resides in the cytoplasm. In terms of biological role, probably phosphorylates lipids; the in vivo substrate is unknown. The protein is Probable lipid kinase YegS-like of Xanthomonas euvesicatoria pv. vesicatoria (strain 85-10) (Xanthomonas campestris pv. vesicatoria).